The chain runs to 397 residues: Flavohemoprotein (397 aa).

In terms of domain architecture, Globin spans 4 to 140 (SFSPHTITLI…IANLLKDREA (137 aa)). A heme b-binding site is contributed by H87. Residues Y97 and E139 each act as charge relay system in the active site. A reductase region spans residues 151–397 (GGWIHWRRFV…FGPMDEEMAA (247 aa)). The region spanning 154–258 (IHWRRFVISK…TPPVGDFFLP (105 aa)) is the FAD-binding FR-type domain. Residues Y192 and 207-210 (RNYS) contribute to the FAD site. 271 to 276 (GVGLTP) is an NADP(+) binding site. 387-390 (FFGP) lines the FAD pocket.

It belongs to the globin family. Two-domain flavohemoproteins subfamily. This sequence in the C-terminal section; belongs to the flavoprotein pyridine nucleotide cytochrome reductase family. The cofactor is heme b. Requires FAD as cofactor.

The catalysed reaction is 2 nitric oxide + NADPH + 2 O2 = 2 nitrate + NADP(+) + H(+). It carries out the reaction 2 nitric oxide + NADH + 2 O2 = 2 nitrate + NAD(+) + H(+). Is involved in NO detoxification in an aerobic process, termed nitric oxide dioxygenase (NOD) reaction that utilizes O(2) and NAD(P)H to convert NO to nitrate, which protects the bacterium from various noxious nitrogen compounds. Therefore, plays a central role in the inducible response to nitrosative stress. The sequence is that of Flavohemoprotein from Xylella fastidiosa (strain Temecula1 / ATCC 700964).